We begin with the raw amino-acid sequence, 87 residues long: Large ribosomal subunit protein bL27 (87 aa).

Residues 1 to 23 (MAHKKGTGSTRNGRDSNAQRLGV) form a disordered region. The segment covering 7–19 (TGSTRNGRDSNAQ) has biased composition (polar residues).

Belongs to the bacterial ribosomal protein bL27 family.

The chain is Large ribosomal subunit protein bL27 (rpmA) from Synechocystis sp. (strain ATCC 27184 / PCC 6803 / Kazusa).